Consider the following 80-residue polypeptide: Acyl carrier protein (80 aa).

One can recognise a Carrier domain in the interval 1–79 (MTEEEIFNKI…EAVEYIKSHQ (79 aa)). The residue at position 39 (Ser-39) is an O-(pantetheine 4'-phosphoryl)serine.

This sequence belongs to the acyl carrier protein (ACP) family. 4'-phosphopantetheine is transferred from CoA to a specific serine of apo-ACP by AcpS. This modification is essential for activity because fatty acids are bound in thioester linkage to the sulfhydryl of the prosthetic group.

Its subcellular location is the cytoplasm. It functions in the pathway lipid metabolism; fatty acid biosynthesis. In terms of biological role, carrier of the growing fatty acid chain in fatty acid biosynthesis. The polypeptide is Acyl carrier protein (Lactobacillus johnsonii (strain CNCM I-12250 / La1 / NCC 533)).